The following is a 332-amino-acid chain: PTS-dependent dihydroxyacetone kinase, dihydroxyacetone-binding subunit DhaK (332 aa).

The DhaK domain occupies 9 to 331; sequence QPQDVVSEML…LNEDVKTISW (323 aa). Residues 55–58, Lys106, and Asp111 contribute to the dihydroxyacetone site; that span reads GSGH. His58 acts as the Proton acceptor in catalysis. Catalysis depends on His220, which acts as the Tele-hemiaminal-histidine intermediate.

As to quaternary structure, homodimer. The dihydroxyacetone kinase complex is composed of a homodimer of DhaM, a homodimer of DhaK and the subunit DhaL.

The catalysed reaction is dihydroxyacetone + phosphoenolpyruvate = dihydroxyacetone phosphate + pyruvate. It participates in polyol metabolism; glycerol degradation. In terms of biological role, dihydroxyacetone binding subunit of the dihydroxyacetone kinase, which is responsible the phosphoenolpyruvate (PEP)-dependent phosphorylation of dihydroxyacetone via a phosphoryl group transfer from DhaL-ATP. The protein is PTS-dependent dihydroxyacetone kinase, dihydroxyacetone-binding subunit DhaK of Lactococcus lactis subsp. lactis (strain IL1403) (Streptococcus lactis).